The following is a 420-amino-acid chain: Serine palmitoyltransferase (420 aa).

The span at 1–21 shows a compositional bias: polar residues; the sequence is MKHNLQDNLQGEQMANTNSNG. The tract at residues 1-25 is disordered; sequence MKHNLQDNLQGEQMANTNSNGGKKP. Pyridoxal 5'-phosphate is bound by residues 132–133, H233, T261, and S263; that span reads GM. K264 is subject to N6-(pyridoxal phosphate)lysine.

It belongs to the class-II pyridoxal-phosphate-dependent aminotransferase family. Homodimer. Pyridoxal 5'-phosphate is required as a cofactor.

Its subcellular location is the cytoplasm. It localises to the cell inner membrane. It carries out the reaction L-serine + hexadecanoyl-CoA + H(+) = 3-oxosphinganine + CO2 + CoA. The protein operates within lipid metabolism; sphingolipid metabolism. Significantly inhibited by palmitoyl-CoA concentrations greater than 100 uM. Functionally, catalyzes the condensation of L-serine with palmitoyl-CoA (hexadecanoyl-CoA) to produce 3-oxosphinganine. The chain is Serine palmitoyltransferase from Bacteriovorax stolpii (Bdellovibrio stolpii).